A 509-amino-acid chain; its full sequence is Cytochrome P450 monooxygenase ARMGADRAFT_974139 (509 aa).

Residues 4–24 (ASLAVVVWAILLVLWLRRIFG) form a helical membrane-spanning segment. 2 N-linked (GlcNAc...) asparagine glycosylation sites follow: asparagine 96 and asparagine 279. Cysteine 439 provides a ligand contact to heme.

Belongs to the cytochrome P450 family. The cofactor is heme.

Its subcellular location is the membrane. The protein operates within secondary metabolite biosynthesis. In terms of biological role, cytochrome P450 monooxygenase, part of the gene cluster that mediates the biosynthesis of melleolides, a range of antifungal and phytotoxic polyketide derivatives composed of an orsellinic acid (OA) moiety esterified to various sesquiterpene alcohols. The first step in melleolides biosynthesis is performed by the delta(6)-protoilludene synthase PRO1 which catalyzes the cyclization of farnesyl diphosphate to protoilludene. The orsellinic acid synthase armB produces OA by condensing acetyl-CoA with 3 malonyl-CoA units in a three-round chain elongation reaction folowed by a C2-C7 ring closure. ArmB further catalyzes the trans-esterification of OA to the various sesquiterpene alcohols resulting from the hydroxylation of protoilludene. The melleolides cluster also includes 5 cytochrome P450 monooxygenases, 4 NAD(+)-dependent oxidoreductases, one flavin-dependent oxidoreductase, and one O-methyltransferase. The cytochrome P450 monooxygenases may be involved in protoilludene hydroxylation to elaborate melleolides with multiple alcohol groups, such as melleolide D, which carries alcohol functionalities at C-4, C-5, C-10, and C-13. The role of the NAD(+)-dependent enzymes remains unknown. Numerous melleolides, including arnamial, show 5'-O-methylation of the aromatic moiety which may be catalyzed by the methyltransferase encoded in the cluster. The flavin-dependent oxidoreductase might represent the dehydrogenase yielding the aldehyde in position 1 of arnamial and other melleolides. Finally, several halogenase localized outside of the cluster, are able to catalyze the transfer of a single chlorine atom to the melleolide backbone, resulting in a 6'-chloromelleolide product. The protein is Cytochrome P450 monooxygenase ARMGADRAFT_974139 of Armillaria gallica (Bulbous honey fungus).